Reading from the N-terminus, the 770-residue chain is DEAD-box ATP-dependent RNA helicase 24 (770 aa).

Residues 1–106 are disordered; that stretch reads MSKRPKLGGF…ADSDDEDDPV (106 aa). Over residues 14–26 the composition is skewed to polar residues; that stretch reads RPTSYSFERSQPP. A compositionally biased stretch (acidic residues) spans 34–43; that stretch reads DDPDLDDIAF. Positions 44–55 are enriched in low complexity; the sequence is SDDAAAPSDAPP. Residues 219 to 247 carry the Q motif motif; the sequence is KSFADCGFPVQLMNAIAKQGYEKPTTIQC. Residues 250–425 form the Helicase ATP-binding domain; it reads LPIVLSGRDI…REILTDPIRV (176 aa). ATP is bound at residue 263 to 270; the sequence is AKTGSGKT. The DEAD box signature appears at 373-376; it reads DEAD. The Helicase C-terminal domain occupies 436 to 599; that stretch reads DIKQVVNVLP…DVPNELMDLA (164 aa). Residues 604 to 613 are compositionally biased toward basic and acidic residues; sequence RFRANRDSRK. 3 disordered regions span residues 604–640, 683–704, and 729–770; these read RFRANRDSRKGGKKSGKGKGGGGGGGGGSGARGRGRG, VSASSSNTPSNSAPSRGAPSSF, and LPAP…GWDR. A compositionally biased stretch (gly residues) spans 621-635; the sequence is GKGGGGGGGGGSGAR. The span at 683–697 shows a compositional bias: low complexity; it reads VSASSSNTPSNSAPS. A compositionally biased stretch (polar residues) spans 744–753; that stretch reads TVENANPNPE. The span at 754–770 shows a compositional bias: basic and acidic residues; it reads SSRDRTRERKRPSGWDR.

Belongs to the DEAD box helicase family.

The catalysed reaction is ATP + H2O = ADP + phosphate + H(+). The protein is DEAD-box ATP-dependent RNA helicase 24 of Oryza sativa subsp. japonica (Rice).